The following is a 390-amino-acid chain: Manganese peroxidase 2 (390 aa).

A signal peptide spans 1-23; it reads MAFNFAAILAFVSLAAVTSAAPS. 5 disulfide bridges follow: C27/C39, C38/C313, C57/C141, C277/C343, and C365/C372. Mn(2+)-binding residues include E59 and E63. The active-site Proton acceptor is the H70. Ca(2+) contacts are provided by D71, G86, D88, and S90. N155 is a glycosylation site (N-linked (GlcNAc...) asparagine). H197 serves as a coordination point for heme b. Residue S198 participates in Ca(2+) binding. D203 is a binding site for Mn(2+). Residues D215, T217, and D222 each contribute to the Ca(2+) site. N241 carries an N-linked (GlcNAc...) asparagine glycan.

It belongs to the peroxidase family. Ligninase subfamily. The cofactor is heme b. Ca(2+) serves as cofactor.

The protein localises to the secreted. It catalyses the reaction 2 Mn(2+) + H2O2 + 2 H(+) = 2 Mn(3+) + 2 H2O. Its function is as follows. Catalyzes the oxidation of Mn(2+) to Mn(3+). The latter, acting as a diffusible redox mediator, is capable of oxidizing a variety of lignin compounds. The polypeptide is Manganese peroxidase 2 (mnp2) (Phlebia radiata (White-rot fungus)).